A 397-amino-acid chain; its full sequence is Chorismate synthase (397 aa).

NADP(+) is bound by residues Arg40 and Arg46. Residues 129 to 131 (RSS), 257 to 258 (QA), Gly302, 317 to 321 (KPISS), and Arg343 contribute to the FMN site.

This sequence belongs to the chorismate synthase family. Homotetramer. The cofactor is FMNH2.

The catalysed reaction is 5-O-(1-carboxyvinyl)-3-phosphoshikimate = chorismate + phosphate. Its pathway is metabolic intermediate biosynthesis; chorismate biosynthesis; chorismate from D-erythrose 4-phosphate and phosphoenolpyruvate: step 7/7. Its function is as follows. Catalyzes the anti-1,4-elimination of the C-3 phosphate and the C-6 proR hydrogen from 5-enolpyruvylshikimate-3-phosphate (EPSP) to yield chorismate, which is the branch point compound that serves as the starting substrate for the three terminal pathways of aromatic amino acid biosynthesis. This reaction introduces a second double bond into the aromatic ring system. This Chlorobaculum tepidum (strain ATCC 49652 / DSM 12025 / NBRC 103806 / TLS) (Chlorobium tepidum) protein is Chorismate synthase.